Here is a 493-residue protein sequence, read N- to C-terminus: Cytochrome P450 2E1 (493 aa).

298–303 (FAGTET) is a substrate binding site. Cys-437 contacts heme.

Belongs to the cytochrome P450 family. As to quaternary structure, interacts with chaperones HSP70 and HSP90; this interaction is required for initial targeting to mitochondria. Requires heme as cofactor. As to expression, highest level in the liver and to a lesser extent in the kidney, with a higher level in the male kidney than in the female.

Its subcellular location is the endoplasmic reticulum membrane. It localises to the microsome membrane. The protein resides in the mitochondrion inner membrane. It carries out the reaction an organic molecule + reduced [NADPH--hemoprotein reductase] + O2 = an alcohol + oxidized [NADPH--hemoprotein reductase] + H2O + H(+). The catalysed reaction is (5Z,8Z,11Z)-eicosatrienoate + reduced [NADPH--hemoprotein reductase] + O2 = 19-hydroxy-(5Z,8Z,11Z)-eicosatrienoate + oxidized [NADPH--hemoprotein reductase] + H2O + H(+). It catalyses the reaction (5Z,8Z,11Z,14Z,17Z)-eicosapentaenoate + reduced [NADPH--hemoprotein reductase] + O2 = 19-hydroxy-(5Z,8Z,11Z,14Z,17Z)-eicosapentaenoate + oxidized [NADPH--hemoprotein reductase] + H2O + H(+). The enzyme catalyses (4Z,7Z,10Z,13Z,16Z,19Z)-docosahexaenoate + reduced [NADPH--hemoprotein reductase] + O2 = 21-hydroxy-(4Z,7Z,10Z,13Z,16Z,19Z)-docosahexaenoate + oxidized [NADPH--hemoprotein reductase] + H2O + H(+). It carries out the reaction dodecanoate + reduced [NADPH--hemoprotein reductase] + O2 = 11-hydroxydodecanoate + oxidized [NADPH--hemoprotein reductase] + H2O + H(+). The catalysed reaction is tetradecanoate + reduced [NADPH--hemoprotein reductase] + O2 = 13-hydroxytetradecanoate + oxidized [NADPH--hemoprotein reductase] + H2O + H(+). It catalyses the reaction 4-nitrophenol + NADPH + O2 + H(+) = 4-nitrocatechol + NADP(+) + H2O. It functions in the pathway lipid metabolism; fatty acid metabolism. Its activity is regulated as follows. The omega-1 hydroxylase activity is stimulated by cytochrome b5. Functionally, a cytochrome P450 monooxygenase involved in the metabolism of fatty acids. Mechanistically, uses molecular oxygen inserting one oxygen atom into a substrate, and reducing the second into a water molecule, with two electrons provided by NADPH via cytochrome P450 reductase (NADPH--hemoprotein reductase). Catalyzes the hydroxylation of carbon-hydrogen bonds. Hydroxylates fatty acids specifically at the omega-1 position displaying the highest catalytic activity for saturated fatty acids. May be involved in the oxidative metabolism of xenobiotics. The protein is Cytochrome P450 2E1 (Cyp2e1) of Mus musculus (Mouse).